We begin with the raw amino-acid sequence, 224 residues long: TM2 domain-containing protein amaretto (224 aa).

An N-terminal signal peptide occupies residues 1 to 18; the sequence is MRIFYGLLAFLVARQHDA. The Extracellular portion of the chain corresponds to 19–154; sequence QAIQARSDKE…FLRAGVPCVR (136 aa). 2 N-linked (GlcNAc...) asparagine glycosylation sites follow: Asn102 and Asn142. A helical membrane pass occupies residues 155 to 175; that stretch reads YTDHYFVTTLIYSMLLGFLGM. The TM2 domain maps to 157-205; the sequence is DHYFVTTLIYSMLLGFLGMDRFCLGQTGTAVGKLLTMGGVGVWWIIDVI. The Cytoplasmic portion of the chain corresponds to 176 to 189; sequence DRFCLGQTGTAVGK. A helical membrane pass occupies residues 190–210; that stretch reads LLTMGGVGVWWIIDVILLITN. Over 211–224 the chain is Extracellular; that stretch reads NLLPEDGSNWNPYV.

This sequence belongs to the TM2 family.

The protein resides in the membrane. Positive regulator of Notch signaling. Maternal neurogenic factor involved in Notch signaling-dependent neuroectodermal specification during early embryogenesis. Functions cooperatively with amx/TM2D3 and bisc/TM2D1. The protein is TM2 domain-containing protein amaretto of Drosophila melanogaster (Fruit fly).